The chain runs to 273 residues: DnaJ homolog subfamily C member 27 (273 aa).

Residues 23 to 30 (GNAEVGKS), 71 to 75 (DMAGH), and 134 to 137 (NKID) each bind GTP. The region spanning 217-273 (DSWDMLGVKPGATRDEVNKAYRKLAVLLHPDKCVAPGSEDAFKAVVNARTALLKNIK) is the J domain.

Belongs to the small GTPase superfamily. Rab family.

The protein resides in the nucleus. Functionally, GTPase possibly involved in regulation of the MEK/ERK pathway. This is DnaJ homolog subfamily C member 27 (DNAJC27) from Gallus gallus (Chicken).